The chain runs to 227 residues: PKHD-type hydroxylase azo0608 (227 aa).

Residues 78 to 178 enclose the Fe2OG dioxygenase domain; sequence RVLTPFFNRY…RVACFMFMQS (101 aa). Residues His-97, Asp-99, and His-159 each contribute to the Fe cation site. Arg-169 is a binding site for 2-oxoglutarate.

Fe(2+) serves as cofactor. Requires L-ascorbate as cofactor.

The polypeptide is PKHD-type hydroxylase azo0608 (Azoarcus sp. (strain BH72)).